The chain runs to 505 residues: uncharacterized protein (505 aa).

The next 14 helical transmembrane spans lie at 9 to 29 (ANLTAFLLSVFLSVWMTPFIV), 49 to 69 (YFSVITVALSSVVVRFFSVAA), 86 to 106 (AASVLISLLLLLPLAGSAFFI), 122 to 142 (LSILIGSVLFILTFLMAGFGA), 156 to 176 (IQAVQMLIRVLSVLLLFACFA), 181 to 201 (QIQLAALAGAVIASVLSFYFF), 235 to 255 (IGVLLFLQIDLLTANLMLGAS), 261 to 281 (AAIIQFPLLLRSLAGTVASLF), 310 to 330 (LLLALPAALLGGLAGPFLTIW), 341 to 361 (LLFIHAGYLVVSLAFMPLFYI), 371 to 391 (PAIVTLLLGAVNVVLAVTLSG), 395 to 415 (LGLYGITLAGAISLILKNAIF), 435 to 455 (IIGPLSAAVFAWTVCKAIQFI), and 464 to 484 (LIATGVTVSFCYAVFAFMLVC).

Its subcellular location is the cell membrane. Its function is as follows. May be involved in the production of the exopolysaccharide (EPS) component of the extracellular matrix during biofilm formation. EPS is responsible for the adhesion of chains of cells into bundles. This is an uncharacterized protein from Bacillus subtilis (strain 168).